Here is a 498-residue protein sequence, read N- to C-terminus: Glycerol kinase (498 aa).

An ADP-binding site is contributed by threonine 12. Residues threonine 12, threonine 13, and serine 14 each contribute to the ATP site. Residue threonine 12 participates in sn-glycerol 3-phosphate binding. Arginine 16 is an ADP binding site. Positions 82, 83, 134, and 243 each coordinate sn-glycerol 3-phosphate. Glycerol-binding residues include arginine 82, glutamate 83, tyrosine 134, aspartate 243, and glutamine 244. Residues threonine 265 and glycine 308 each coordinate ADP. Residues threonine 265, glycine 308, glutamine 312, and glycine 409 each contribute to the ATP site. The ADP site is built by glycine 409 and asparagine 413.

Belongs to the FGGY kinase family. In terms of assembly, homotetramer and homodimer (in equilibrium).

It carries out the reaction glycerol + ATP = sn-glycerol 3-phosphate + ADP + H(+). The protein operates within polyol metabolism; glycerol degradation via glycerol kinase pathway; sn-glycerol 3-phosphate from glycerol: step 1/1. Activated by phosphorylation and inhibited by fructose 1,6-bisphosphate (FBP). Its function is as follows. Key enzyme in the regulation of glycerol uptake and metabolism. Catalyzes the phosphorylation of glycerol to yield sn-glycerol 3-phosphate. The polypeptide is Glycerol kinase (Clostridium botulinum (strain Langeland / NCTC 10281 / Type F)).